A 511-amino-acid polypeptide reads, in one-letter code: Inositol-3-phosphate synthase (511 aa).

24 residues coordinate NAD(+): G70, N71, N72, D143, S179, I180, Q190, R193, S230, A231, N232, T233, G281, S282, D306, T309, N340, N341, D342, K355, G393, D394, D422, and S423.

Belongs to the myo-inositol 1-phosphate synthase family. It depends on NAD(+) as a cofactor.

The protein localises to the cytoplasm. It catalyses the reaction D-glucose 6-phosphate = 1D-myo-inositol 3-phosphate. It participates in polyol metabolism; myo-inositol biosynthesis; myo-inositol from D-glucose 6-phosphate: step 1/2. Key enzyme in myo-inositol biosynthesis pathway that catalyzes the conversion of glucose 6-phosphate to 1-myo-inositol 1-phosphate in a NAD-dependent manner. Rate-limiting enzyme in the synthesis of all inositol-containing compounds. In Dictyostelium discoideum (Social amoeba), this protein is Inositol-3-phosphate synthase (ino1).